The following is a 362-amino-acid chain: Caspase activity and apoptosis inhibitor 1 (362 aa).

Positions 1 to 14 (MTGKKSSREKRRKR) are enriched in basic residues. Disordered stretches follow at residues 1-44 (MTGK…SGCG) and 65-101 (TGGG…GSLQ). Positions 19–32 (AAAALAAPDLVPAV) are enriched in low complexity. 2 stretches are compositionally biased toward gly residues: residues 33–44 (GGSGSGSTSGCG) and 65–74 (TGGGSGGSCW). Residue Ser89 is modified to Phosphoserine. Phosphothreonine is present on Thr90. Lys105 is covalently cross-linked (Glycyl lysine isopeptide (Lys-Gly) (interchain with G-Cter in SUMO2)). Residues Ser121 and Ser204 each carry the phosphoserine modification. Disordered stretches follow at residues 226-251 (SCVD…GKGE), 269-291 (GPCN…EAGQ), and 309-332 (LAES…DVQP). Positions 235–251 (RENKQPEGLELKQGKGE) are enriched in basic and acidic residues. A compositionally biased stretch (low complexity) spans 273 to 282 (EEAAAPEVPE). Residues 282-312 (ENTVQSEAGQIDDLEKDIEKSVNEILGLAES) are a coiled coil. Ser313 is subject to Phosphoserine.

Anti-apoptotic protein that modulates a caspase-10 dependent mitochondrial caspase-3/9 feedback amplification loop. This Bos taurus (Bovine) protein is Caspase activity and apoptosis inhibitor 1 (CAAP1).